Consider the following 211-residue polypeptide: Methylthioribulose-1-phosphate dehydratase (211 aa).

Positions 94 and 96 each coordinate Zn(2+).

This sequence belongs to the aldolase class II family. MtnB subfamily. Zn(2+) is required as a cofactor.

The catalysed reaction is 5-(methylsulfanyl)-D-ribulose 1-phosphate = 5-methylsulfanyl-2,3-dioxopentyl phosphate + H2O. The protein operates within amino-acid biosynthesis; L-methionine biosynthesis via salvage pathway; L-methionine from S-methyl-5-thio-alpha-D-ribose 1-phosphate: step 2/6. Its function is as follows. Catalyzes the dehydration of methylthioribulose-1-phosphate (MTRu-1-P) into 2,3-diketo-5-methylthiopentyl-1-phosphate (DK-MTP-1-P). The chain is Methylthioribulose-1-phosphate dehydratase from Pseudoalteromonas translucida (strain TAC 125).